We begin with the raw amino-acid sequence, 260 residues long: Hemin import ATP-binding protein HmuV (260 aa).

In terms of domain architecture, ABC transporter spans 7–243 (IQASNISVTF…ERIEQVYGYS (237 aa)). 39–46 (GPNGAGKS) provides a ligand contact to ATP.

It belongs to the ABC transporter superfamily. Heme (hemin) importer (TC 3.A.1.14.5) family. In terms of assembly, the complex is composed of two ATP-binding proteins (HmuV), two transmembrane proteins (HmuU) and a solute-binding protein (HmuT).

Its subcellular location is the cell inner membrane. In terms of biological role, part of the ABC transporter complex HmuTUV involved in hemin import. Responsible for energy coupling to the transport system. In Vibrio anguillarum (strain ATCC 68554 / 775) (Listonella anguillarum), this protein is Hemin import ATP-binding protein HmuV.